Reading from the N-terminus, the 98-residue chain is Small proline-rich protein 2B (98 aa).

Tandem repeats lie at residues 21 to 29 (PKCPEPCPP), 30 to 38 (PKCPEPCPP), 39 to 47 (PVCCEPCPP), 48 to 56 (PKCPEPCPP), and 57 to 65 (PVCCEPCPP). The tract at residues 21–65 (PKCPEPCPPPKCPEPCPPPVCCEPCPPPKCPEPCPPPVCCEPCPP) is 5 X 9 AA approximate tandem repeats.

It belongs to the cornifin (SPRR) family. In terms of tissue distribution, expressed in uterus.

It localises to the cytoplasm. In terms of biological role, cross-linked envelope protein of keratinocytes. It is a keratinocyte protein that first appears in the cell cytosol, but ultimately becomes cross-linked to membrane proteins by transglutaminase. All that results in the formation of an insoluble envelope beneath the plasma membrane. This chain is Small proline-rich protein 2B (Sprr2b), found in Mus musculus (Mouse).